The following is a 312-amino-acid chain: Malate dehydrogenase (312 aa).

Residues Gly12 to Gly17 and Asp36 contribute to the NAD(+) site. 2 residues coordinate substrate: Arg87 and Arg93. NAD(+) contacts are provided by residues Asn100 and Leu123 to Asn125. Asn125 is a binding site for substrate. Position 149 is a phosphoserine (Ser149). A substrate-binding site is contributed by Arg156. The Proton acceptor role is filled by His180.

It belongs to the LDH/MDH superfamily. MDH type 3 family. Homotetramer.

The catalysed reaction is (S)-malate + NAD(+) = oxaloacetate + NADH + H(+). Its function is as follows. Catalyzes the reversible oxidation of malate to oxaloacetate. This is Malate dehydrogenase from Bacillus israeli.